The chain runs to 177 residues: Disulfide bond formation protein B (177 aa).

The Cytoplasmic segment spans residues 1 to 14 (MLALLKQFSEKRFV). Residues 15 to 31 (WFLLAFSSLALESTALY) form a helical membrane-spanning segment. Residues 32 to 49 (FQYGMGLQPCVLCVYERL) are Periplasmic-facing. Cysteines 41 and 44 form a disulfide. A helical transmembrane segment spans residues 50 to 65 (AMIGLFVAGTIALLQP). Residues 66 to 72 (RVFILRL) lie on the Cytoplasmic side of the membrane. Residues 73–90 (IALALGLFSSIKGLLISF) form a helical membrane-spanning segment. Topologically, residues 91-145 (RHLDLQMNPAPWKQCEFIPNFPETLPFHQWFPFIFNPTGSCNESQWSLFGLTMVQ) are periplasmic. A disulfide bond links C105 and C131. The helical transmembrane segment at 146 to 164 (WLVVIFSLYVVILTLLLIA) threads the bilayer. Topologically, residues 165 to 177 (QVIKTRKQRRLFN) are cytoplasmic.

Belongs to the DsbB family.

It localises to the cell inner membrane. Required for disulfide bond formation in some periplasmic proteins. Acts by oxidizing the DsbA protein. This chain is Disulfide bond formation protein B, found in Haemophilus influenzae (strain ATCC 51907 / DSM 11121 / KW20 / Rd).